Reading from the N-terminus, the 147-residue chain is Glucosamine 6-phosphate N-acetyltransferase (147 aa).

The 141-residue stretch at 7–147 (LELRVLEESD…AHERQMRLDL (141 aa)) folds into the N-acetyltransferase domain. Residues T28 and 86–88 (EDV) contribute to the D-glucosamine 6-phosphate site. Acetyl-CoA is bound by residues 88–90 (VVV) and 96–101 (GAGLGK). D-glucosamine 6-phosphate-binding positions include 117–118 (YK) and D122. Acetyl-CoA is bound at residue 131–133 (YEK).

This sequence belongs to the acetyltransferase family. GNA1 subfamily. Homodimer. Contains poly-N-acetyllactosamines.

It is found in the glycosome. It carries out the reaction D-glucosamine 6-phosphate + acetyl-CoA = N-acetyl-D-glucosamine 6-phosphate + CoA + H(+). It functions in the pathway nucleotide-sugar biosynthesis; UDP-N-acetyl-alpha-D-glucosamine biosynthesis; N-acetyl-alpha-D-glucosamine 1-phosphate from alpha-D-glucosamine 6-phosphate (route I): step 1/2. Involved in the biosynthesis of UDP-N-acetyl-alpha-D-glucosamine. Catalyzes the formation of N-acetyl-D-glucosamine 6-phosphate from acetyl-coenzyme A (acetyl-CoA) and D-glucosamine 6-phosphate. The chain is Glucosamine 6-phosphate N-acetyltransferase from Trypanosoma brucei brucei.